A 407-amino-acid polypeptide reads, in one-letter code: Phosphopentomutase (407 aa).

Positions 10, 306, 311, 347, 348, and 359 each coordinate Mn(2+).

Belongs to the phosphopentomutase family. Mn(2+) is required as a cofactor.

It localises to the cytoplasm. It catalyses the reaction 2-deoxy-alpha-D-ribose 1-phosphate = 2-deoxy-D-ribose 5-phosphate. The enzyme catalyses alpha-D-ribose 1-phosphate = D-ribose 5-phosphate. Its pathway is carbohydrate degradation; 2-deoxy-D-ribose 1-phosphate degradation; D-glyceraldehyde 3-phosphate and acetaldehyde from 2-deoxy-alpha-D-ribose 1-phosphate: step 1/2. Its function is as follows. Isomerase that catalyzes the conversion of deoxy-ribose 1-phosphate (dRib-1-P) and ribose 1-phosphate (Rib-1-P) to deoxy-ribose 5-phosphate (dRib-5-P) and ribose 5-phosphate (Rib-5-P), respectively. The protein is Phosphopentomutase of Shigella boydii serotype 18 (strain CDC 3083-94 / BS512).